Here is a 597-residue protein sequence, read N- to C-terminus: uncharacterized protein (597 aa).

Residues 378–575 (EVSFVVDNSG…YLPRELLRTL (198 aa)) form the VWFA domain.

This is an uncharacterized protein from Treponema pallidum (strain Nichols).